The chain runs to 412 residues: Multifunctional CCA protein (412 aa).

ATP-binding residues include G8 and R11. CTP contacts are provided by G8 and R11. D21 and D23 together coordinate Mg(2+). Residues R91, R137, and R140 each contribute to the ATP site. CTP contacts are provided by R91, R137, and R140. The region spanning T228–W329 is the HD domain.

Belongs to the tRNA nucleotidyltransferase/poly(A) polymerase family. Bacterial CCA-adding enzyme type 1 subfamily. In terms of assembly, monomer. Can also form homodimers and oligomers. Mg(2+) is required as a cofactor. The cofactor is Ni(2+).

It catalyses the reaction a tRNA precursor + 2 CTP + ATP = a tRNA with a 3' CCA end + 3 diphosphate. The catalysed reaction is a tRNA with a 3' CCA end + 2 CTP + ATP = a tRNA with a 3' CCACCA end + 3 diphosphate. Its function is as follows. Catalyzes the addition and repair of the essential 3'-terminal CCA sequence in tRNAs without using a nucleic acid template. Adds these three nucleotides in the order of C, C, and A to the tRNA nucleotide-73, using CTP and ATP as substrates and producing inorganic pyrophosphate. tRNA 3'-terminal CCA addition is required both for tRNA processing and repair. Also involved in tRNA surveillance by mediating tandem CCA addition to generate a CCACCA at the 3' terminus of unstable tRNAs. While stable tRNAs receive only 3'-terminal CCA, unstable tRNAs are marked with CCACCA and rapidly degraded. This chain is Multifunctional CCA protein, found in Escherichia coli (strain SE11).